The chain runs to 475 residues: MSPQTETKTGFGFKAGVKDYRLNYYTPEYDTKDTDILAAFRMTPQPGVPPEEAGAAVAAESSTGTWTTVWTDGLTSLDRYKGRCYDIEPVAGEENQYIAYVAYPLDLFEEGSVTNMFTSIVGNVFGFKALRALRLEDLRIPPAYSKTFQGPPHGIQAERDKLNKYGRPLLGCTIKPKLGLSAKNYGRAVYECLRGGLDFTKDDENVNSQPFMRWRDRFLFVAEALFKSQAETGEVKGHYLNATAGTCEEMMKRAIFARELGAPIVMHDYLTGGFTANTSLAHYCRDNGLLLHIHRAMHAVIDRQRNHGMHFRVLAKALRMSGGDHVHAGTVVGKLEGEREVTLGFVDSLRDDYIEKDRSRGIYFTQDWVSMPGVFPVASGGIHVWHMPALTEIFGDDSVLQFGGGTLGHPWGNAPGAVANRVASEACVQARNEGRDLAREGNEIIREASKWSPELAAACEVWKEIKFEFETIDTL.

Positions 1–2 (MS) are excised as a propeptide. At Pro3 the chain carries N-acetylproline. Residue Lys14 is modified to N6,N6,N6-trimethyllysine. Positions 123 and 173 each coordinate substrate. Lys175 (proton acceptor) is an active-site residue. Residue Lys177 coordinates substrate. 3 residues coordinate Mg(2+): Lys201, Asp203, and Glu204. Lys201 bears the N6-carboxylysine mark. The Proton acceptor role is filled by His294. 3 residues coordinate substrate: Arg295, His327, and Ser379.

This sequence belongs to the RuBisCO large chain family. Type I subfamily. In terms of assembly, heterohexadecamer of 8 large chains and 8 small chains; disulfide-linked. The disulfide link is formed within the large subunit homodimers. Mg(2+) is required as a cofactor. The disulfide bond which can form in the large chain dimeric partners within the hexadecamer appears to be associated with oxidative stress and protein turnover.

It localises to the plastid. The protein resides in the chloroplast. The enzyme catalyses 2 (2R)-3-phosphoglycerate + 2 H(+) = D-ribulose 1,5-bisphosphate + CO2 + H2O. The catalysed reaction is D-ribulose 1,5-bisphosphate + O2 = 2-phosphoglycolate + (2R)-3-phosphoglycerate + 2 H(+). In terms of biological role, ruBisCO catalyzes two reactions: the carboxylation of D-ribulose 1,5-bisphosphate, the primary event in carbon dioxide fixation, as well as the oxidative fragmentation of the pentose substrate in the photorespiration process. Both reactions occur simultaneously and in competition at the same active site. This chain is Ribulose bisphosphate carboxylase large chain, found in Angiopteris evecta (Mule's foot fern).